A 242-amino-acid polypeptide reads, in one-letter code: Pyridoxine 5'-phosphate synthase (242 aa).

Asn-6 is a 3-amino-2-oxopropyl phosphate binding site. 8–9 (DH) lines the 1-deoxy-D-xylulose 5-phosphate pocket. Arg-17 is a binding site for 3-amino-2-oxopropyl phosphate. Catalysis depends on His-42, which acts as the Proton acceptor. 1-deoxy-D-xylulose 5-phosphate is bound by residues Arg-44 and His-49. The Proton acceptor role is filled by Glu-69. Thr-99 is a binding site for 1-deoxy-D-xylulose 5-phosphate. The active-site Proton donor is His-190. 3-amino-2-oxopropyl phosphate-binding positions include Gly-191 and 212–213 (GH).

Belongs to the PNP synthase family. In terms of assembly, homooctamer; tetramer of dimers.

The protein localises to the cytoplasm. The catalysed reaction is 3-amino-2-oxopropyl phosphate + 1-deoxy-D-xylulose 5-phosphate = pyridoxine 5'-phosphate + phosphate + 2 H2O + H(+). It functions in the pathway cofactor biosynthesis; pyridoxine 5'-phosphate biosynthesis; pyridoxine 5'-phosphate from D-erythrose 4-phosphate: step 5/5. Its function is as follows. Catalyzes the complicated ring closure reaction between the two acyclic compounds 1-deoxy-D-xylulose-5-phosphate (DXP) and 3-amino-2-oxopropyl phosphate (1-amino-acetone-3-phosphate or AAP) to form pyridoxine 5'-phosphate (PNP) and inorganic phosphate. This chain is Pyridoxine 5'-phosphate synthase, found in Neisseria meningitidis serogroup B (strain ATCC BAA-335 / MC58).